Consider the following 381-residue polypeptide: Flagellar P-ring protein (381 aa).

Positions 1 to 33 are cleaved as a signal peptide; it reads MQFFNTLHPTRPHWLLAALCLIASLLGAGTAQA.

Belongs to the FlgI family. As to quaternary structure, the basal body constitutes a major portion of the flagellar organelle and consists of four rings (L,P,S, and M) mounted on a central rod.

It is found in the periplasm. The protein localises to the bacterial flagellum basal body. Assembles around the rod to form the L-ring and probably protects the motor/basal body from shearing forces during rotation. The chain is Flagellar P-ring protein from Albidiferax ferrireducens (strain ATCC BAA-621 / DSM 15236 / T118) (Rhodoferax ferrireducens).